The primary structure comprises 48 residues: SPbeta prophage-derived uncharacterized protein YotE (48 aa).

The sequence is that of SPbeta prophage-derived uncharacterized protein YotE (yotE) from Bacillus subtilis (strain 168).